Reading from the N-terminus, the 269-residue chain is tRNA pseudouridine synthase A (269 aa).

Asp-51 functions as the Nucleophile in the catalytic mechanism. Tyr-109 contacts substrate.

The protein belongs to the tRNA pseudouridine synthase TruA family. Homodimer.

It catalyses the reaction uridine(38/39/40) in tRNA = pseudouridine(38/39/40) in tRNA. Functionally, formation of pseudouridine at positions 38, 39 and 40 in the anticodon stem and loop of transfer RNAs. This chain is tRNA pseudouridine synthase A, found in Aeromonas salmonicida (strain A449).